Consider the following 262-residue polypeptide: ATP synthase subunit a (262 aa).

The next 6 membrane-spanning stretches (helical) occupy residues 50–70 (TMIMTWITMALVLLFAWACTK), 107–127 (MMPIIVTFFIYIVFANLLGLI), 141–161 (FGLALIVVLLIHYHGLKANGV), 194–214 (LYGNIFAGEVLIAVLLGLINI), 218–238 (VFGGFIPSVIWLAFSVFVGFV), and 239–259 (QAFVFSMLTIAYVSQFAAHEA).

Belongs to the ATPase A chain family. As to quaternary structure, F-type ATPases have 2 components, CF(1) - the catalytic core - and CF(0) - the membrane proton channel. CF(1) has five subunits: alpha(3), beta(3), gamma(1), delta(1), epsilon(1). CF(0) has three main subunits: a(1), b(2) and c(9-12). The alpha and beta chains form an alternating ring which encloses part of the gamma chain. CF(1) is attached to CF(0) by a central stalk formed by the gamma and epsilon chains, while a peripheral stalk is formed by the delta and b chains.

It localises to the cell membrane. Its function is as follows. Key component of the proton channel; it plays a direct role in the translocation of protons across the membrane. This Desulforamulus reducens (strain ATCC BAA-1160 / DSM 100696 / MI-1) (Desulfotomaculum reducens) protein is ATP synthase subunit a.